The chain runs to 668 residues: MEVGRFASKSASMTYLLLVLLVGFILPQQGQHAHARTLARRDNSPTDICKRWSQQTAIVNGTLYIYGGRSTTDASQKDNTWNDNFLTLDLKSSWGISAPKLTGLPRGDNGPPPVSNGYLWNSFSSLFLYGGEFSDNPATEPVDFSLWEYSIPSSSWIEHKSPKTSSGENSAEANIPVQRSAEGAGINVPDLGRGWYFGGHLDGYTTKGWSQSIPRVYLKSMIEYTFPGHTNNGVKINTDDKRAGPEGVWRNITEGGLQDSAGFTERADGVLVYIPGFGKEGIILGLAGGTNATFTQMNVIDVFDIASSKWYKQATSGKTPKIRVNPCAVAASAADGSSTQVYLFGGQNLIPYGEQIQYNDMWILSIPSFTWIEAKTDGQSVPPARAGHTCNIWNSQIVVTGGYVGQDLSCDSPGIYVFDASELTWKNQYTALEGGNDLNQQASQTRDSSGLGGSYGYRVPKVVQSVIGGDETGKATQTVPAVAPTDGPLATGQPLTYTVLPTAGSGPHAGSPGSGSDGPNIAAIVAGVIAGCLGVLAIYLGFVTWLYRRRLAIYKSHLAATQRSSIGSYGDKISSFPPRYSDHMSSSGLGTTGSTGNLTVTTARMSWISGDNQRHNHTRSSSGGNFDHLAQPERPSTSSSVEDLLAGQEPTFLGVMLNPRQTLRVINQ.

A signal peptide spans methionine 1 to histidine 32. At alanine 33–alanine 522 the chain is on the extracellular side. An N-linked (GlcNAc...) asparagine glycan is attached at asparagine 60. 2 Kelch repeats span residues threonine 62–aspartate 108 and serine 125–proline 176. N-linked (GlcNAc...) asparagine glycosylation is found at asparagine 251 and asparagine 291. Kelch repeat units follow at residues isoleucine 283–alanine 331, glutamine 340–serine 395, glutamine 396–threonine 445, and valine 463–alanine 509. Residues alanine 523 to valine 543 form a helical membrane-spanning segment. The Cytoplasmic segment spans residues threonine 544–glutamine 668. The disordered stretch occupies residues aspartate 611–glutamate 642.

It localises to the membrane. It is found in the secreted. This chain is Kelch repeat-containing protein ARB_01230, found in Arthroderma benhamiae (strain ATCC MYA-4681 / CBS 112371) (Trichophyton mentagrophytes).